Here is a 611-residue protein sequence, read N- to C-terminus: Elongation factor 4 (611 aa).

The tr-type G domain occupies 11 to 193 (KHIRNFSIVA…KIVKDVPAPT (183 aa)). Residues 23 to 28 (DHGKST) and 140 to 143 (NKID) contribute to the GTP site.

It belongs to the TRAFAC class translation factor GTPase superfamily. Classic translation factor GTPase family. LepA subfamily.

The protein resides in the cell membrane. It carries out the reaction GTP + H2O = GDP + phosphate + H(+). In terms of biological role, required for accurate and efficient protein synthesis under certain stress conditions. May act as a fidelity factor of the translation reaction, by catalyzing a one-codon backward translocation of tRNAs on improperly translocated ribosomes. Back-translocation proceeds from a post-translocation (POST) complex to a pre-translocation (PRE) complex, thus giving elongation factor G a second chance to translocate the tRNAs correctly. Binds to ribosomes in a GTP-dependent manner. In Limosilactobacillus reuteri (strain DSM 20016) (Lactobacillus reuteri), this protein is Elongation factor 4.